A 361-amino-acid chain; its full sequence is Elongator complex protein 4 (361 aa).

Disordered stretches follow at residues 93–124 and 338–361; these read QLPG…PQQE and DDEQ…SLDF. 2 stretches are compositionally biased toward polar residues: residues 104–121 and 346–355; these read NENS…SKNP and ISNTNPQKQP.

Belongs to the ELP4 family. In terms of assembly, component of the elongator complex.

The protein localises to the cytoplasm. Its subcellular location is the nucleus. It functions in the pathway tRNA modification; 5-methoxycarbonylmethyl-2-thiouridine-tRNA biosynthesis. Functionally, component of the elongator complex, a multiprotein complex which is required for multiple tRNA modifications, including mcm5U (5-methoxycarbonylmethyl uridine), mcm5s2U (5-methoxycarbonylmethyl-2-thiouridine), and ncm5U (5-carbamoylmethyl uridine). The elongator complex catalyzes formation of carboxymethyluridine in the wobble base at position 34 in tRNAs. The chain is Elongator complex protein 4 from Schizosaccharomyces pombe (strain 972 / ATCC 24843) (Fission yeast).